The chain runs to 381 residues: Pentraxin-related protein PTX3 (381 aa).

The first 17 residues, 1 to 17 (MHLLAILFCALWSAVLA), serve as a signal peptide directing secretion. Coiled coils occupy residues 74–101 (LQAT…SLAR) and 143–167 (EEAG…HAVQ). 2 cysteine pairs are disulfide-bonded: C179/C357 and C210/C271. Residues 179 to 381 (CETAILFPMR…QPHGGAQYVS (203 aa)) form the Pentraxin (PTX) domain. N220 carries an N-linked (GlcNAc...) asparagine glycan.

Homooctamer; disulfide-linked. Binds to C1q. As to quaternary structure, (Microbial infection) Interacts with SARS coronavirus-2/SARS-CoV-2 Nucleoprotein and Spike protein homotrimer. Post-translationally, glycosylated.

The protein localises to the secreted. Plays a role in the regulation of innate resistance to pathogens, inflammatory reactions, possibly clearance of self-components and female fertility. The polypeptide is Pentraxin-related protein PTX3 (Homo sapiens (Human)).